The following is a 153-amino-acid chain: MASLEERLTEMLAPSVEDLGYELVGVEYIRAGKHSTLRVYIDQDEGILVDDCAAVSRQVSAIMDVEDPITNEYSLEVSSPGMNRPLFKAEHYQIFAGEEVKIQLRMPIQNRRRWKGVIVSAEDEIICLNIEGREERFSLSNIQKANIVPKFDN.

The protein belongs to the RimP family.

Its subcellular location is the cytoplasm. Required for maturation of 30S ribosomal subunits. This is Ribosome maturation factor RimP from Psychromonas ingrahamii (strain DSM 17664 / CCUG 51855 / 37).